A 184-amino-acid chain; its full sequence is NADH-quinone oxidoreductase subunit B (184 aa).

Cysteine 37, cysteine 38, cysteine 103, and cysteine 132 together coordinate [4Fe-4S] cluster.

Belongs to the complex I 20 kDa subunit family. As to quaternary structure, NDH-1 is composed of 14 different subunits. Subunits NuoB, C, D, E, F, and G constitute the peripheral sector of the complex. [4Fe-4S] cluster is required as a cofactor.

The protein localises to the cell membrane. The catalysed reaction is a quinone + NADH + 5 H(+)(in) = a quinol + NAD(+) + 4 H(+)(out). Functionally, NDH-1 shuttles electrons from NADH, via FMN and iron-sulfur (Fe-S) centers, to quinones in the respiratory chain. The immediate electron acceptor for the enzyme in this species is believed to be a menaquinone. Couples the redox reaction to proton translocation (for every two electrons transferred, four hydrogen ions are translocated across the cytoplasmic membrane), and thus conserves the redox energy in a proton gradient. The polypeptide is NADH-quinone oxidoreductase subunit B (Rhodococcus opacus (strain B4)).